The chain runs to 393 residues: Na(+)/H(+) antiporter NhaA (393 aa).

A run of 12 helical transmembrane segments spans residues 23–43, 58–78, 96–116, 126–146, 155–175, 178–198, 201–221, 224–244, 265–285, 298–318, 334–354, and 367–387; these read AGGI…NSPF, LSLA…LVGL, MLPG…FAVL, GWAV…SLLG, VFLA…IAIF, AEIS…LFVM, MGVV…FFVF, GVHA…KPAP, VAFI…FKGL, ILLG…WLAI, LYGV…IGLL, and IGVL…LRAA.

The protein belongs to the NhaA Na(+)/H(+) (TC 2.A.33) antiporter family.

Its subcellular location is the cell inner membrane. It catalyses the reaction Na(+)(in) + 2 H(+)(out) = Na(+)(out) + 2 H(+)(in). Its function is as follows. Na(+)/H(+) antiporter that extrudes sodium in exchange for external protons. This chain is Na(+)/H(+) antiporter NhaA, found in Brucella suis (strain ATCC 23445 / NCTC 10510).